The primary structure comprises 132 residues: Large ribosomal subunit protein uL22c (132 aa).

The protein belongs to the universal ribosomal protein uL22 family. As to quaternary structure, part of the 50S ribosomal subunit.

It is found in the plastid. The protein resides in the chloroplast. This protein binds specifically to 23S rRNA. Its function is as follows. The globular domain of the protein is located near the polypeptide exit tunnel on the outside of the subunit, while an extended beta-hairpin is found that lines the wall of the exit tunnel in the center of the 70S ribosome. This chain is Large ribosomal subunit protein uL22c (rpl22), found in Populus alba (White poplar).